We begin with the raw amino-acid sequence, 139 residues long: Ribulose bisphosphate carboxylase small subunit (139 aa).

This sequence belongs to the RuBisCO small chain family. As to quaternary structure, heterohexadecamer of 8 large and 8 small subunits.

Its subcellular location is the plastid. It localises to the chloroplast. In terms of biological role, ruBisCO catalyzes two reactions: the carboxylation of D-ribulose 1,5-bisphosphate, the primary event in carbon dioxide fixation, as well as the oxidative fragmentation of the pentose substrate in the photorespiration process. Both reactions occur simultaneously and in competition at the same active site. Although the small subunit is not catalytic it is essential for maximal activity. The chain is Ribulose bisphosphate carboxylase small subunit from Guillardia theta (Cryptophyte).